Consider the following 765-residue polypeptide: MMEETTDNTGTISSQKNVAASGHNHHHRYKYISNYGVGRRFLFFASCFGFYAFVAATYAWFVFPPHIGRTDHVSSSSLGCREDNEGSWSIGVFYGDSPFSLKPIETRNVWRNESGAWPVTNPVITCASFTNSGLPSNFLADPFLYVQGDTLYLFFETKSPITMQGDIGAAKSIDKGATWEPLGIALDEAWHLSFPFVFNYNGEIYMMPESNEIGQLNLYRAVNFPLSWKLEKVILKKPLVDSTIVHHEGIYWLIGSDHTGFGAKKNGQLEIWYSSSPLGTWKPHKKNPIYNGKRSIGARNGGRAFLYDGSLYRVGQDCGENYGKRIRVSKIEVLSKEEYREVEVPFSLEASRKGKNSWNGVRQHHFDVKQLSSGEFIGLVDGDRVTSGDLFHRVILGYASLAAAISVVILLGFLLGVVNCIVPSTWCMNYYAGKRTDALLNLETAGLFSEKLRRIGSRLNRVPPFLRGFVKPNSSMGKFTLGVIVILGLLLTCVGVRYIYGGSGAVEPYPFKGHLSQFTLATMTYDARLWNLKMYVKRYSRCPSVKEIVVIWNKGPPPDLSELDSAVPVRIRVQKQNSLNNRFEIDPLIKTRAVLELDDDIMMPCDDIEKGFRVWREHPERLVGFYPRFVDQTMTYSAEKFARSHKGYNMILTGAAFMDVRFAFDMYQSDKAKLGRVFVDEQFNCEDILLNFLYANASGSGKAVEYVRPSLVTIDTSKFSGVAISGNTNQHYRKRSKCLRRFSDLYGSLVDRRWEFGGRKDGWDL.

The next 3 membrane-spanning stretches (helical) occupy residues 43-63 (FFAS…WFVF), 394-414 (VILG…LGFL), and 476-496 (MGKF…CVGV). Substrate is bound by residues Asn553, 577 to 582 (NSLNNR), 598 to 600 (DDD), Arg628, and 683 to 687 (FNCED). Asp600 is a binding site for Mn(2+). A disulfide bridge links Cys685 with Cys738. Asp687 is a catalytic residue.

Belongs to the glycosyltransferase 64 family. Requires Mn(2+) as cofactor. Specifically and highly expressed in developing embryos and mature seeds. Also detected at low levels in stigma and pollen.

It is found in the membrane. It carries out the reaction an N-(2R-hydroxy-very-long-chain fatty acyl)-(R)-4-hydroxysphingoid base + a 1,2-diacyl-sn-glycero-3-phospho-(1D-myo-inositol) = a 1D-myo-inositol-1-phospho-N-[(R)-2-hydroxy-very-long-chain fatty acyl]-(R)-4-hydroxysphingoid base + a 1,2-diacyl-sn-glycerol. The protein operates within sphingolipid metabolism. In terms of biological role, glycosyltransferase that mediates the glycosylation of glycosylinositol phosphorylceramides (GIPCs), the major sphingolipids in the plasma membrane; acts as a HexN(Ac)-specific GIPC sugar transferase and accepts glucosamine (GlcN) and N-acetylglucosamine (GlcNAc) as the sugar unit. Responsible for the glycosylation of a subgroup of GIPCs found in seeds and pollen that contain GlcNAc and GlcN (GlcN(Ac)). Maybe involved in the maintenance of cell-cell adhesion. In Arabidopsis thaliana (Mouse-ear cress), this protein is Glucosamine inositolphosphorylceramide transferase 1.